Here is a 351-residue protein sequence, read N- to C-terminus: uncharacterized protein (351 aa).

In terms of domain architecture, HTH lacI-type spans 14–69 (PRLADIAAQAQVSEATASRVLNGRPASRXSTRQRVLAALDLLGYERPTRLRRRSAG). The H-T-H motif DNA-binding region spans 16-35 (LADIAAQAQVSEATASRVLN).

Functionally, putative sugar-binding regulatory protein for the alpha-amylase gene. This is an uncharacterized protein from Streptomyces limosus (Streptomyces albidoflavus).